The following is an 82-amino-acid chain: Mu-conotoxin GVIIJ (82 aa).

An N-terminal signal peptide occupies residues 1-22; it reads MKLTCVVIVAALLLTACQLITA. Residues 23–47 constitute a propeptide that is removed on maturation; the sequence is LDCGGTQKHRALRSTIKLSLLRQHR. 6'-bromotryptophan is present on W49. Disulfide bonds link C50/C65, C57/C69, and C64/C76. Residue P53 is modified to 4-hydroxyproline. C71 contacts a protein.

The protein belongs to the conotoxin O1 superfamily. Cys-71 is a key residue that tethers to the channel by covalent attachment, leading to nearly irreversible inhibition (k(off) very low). In order to determine the solution structure without dimerization, this residue was mutated to Cys. Expressed by the venom duct.

It localises to the secreted. In terms of biological role, mu-conotoxins block voltage-gated sodium channels (Nav). This toxin (GVIIJ(SSG)) blocks Nav1.1/SCN1A (Kd=11 nM), Nav1.2/SCN2A (Kd=11 nM), Nav1.3/SCN3A (Kd=15 nM), Nav1.4/SCN4A (Kd=4.7 nM), Nav1.6/SCN8A (Kd=360 nM) and Nav1.7/SCN9A (Kd=41 nM). It binds the channel at the newly described site 8, which is composed by two surfaces whose one contains a non-disulfide-bonded cysteine (which is free to covalently bind the toxin Cys-71). It is noteworthy that coexpression of subunits beta-2 or beta-4 (but not beta-1 or beta-3) protects rNav1.1-1.7 against block by the toxin, since these subunits (thanks to their extracellular domain) covalently bind to the key cysteine of the channel, thus preventing the covalent binding of the toxin. This chain is Mu-conotoxin GVIIJ, found in Conus geographus (Geography cone).